Reading from the N-terminus, the 613-residue chain is Metacaspase-1 (613 aa).

Residues His-404 and Cys-460 contribute to the active site.

It belongs to the peptidase C14B family. Monomer.

Its activity is regulated as follows. Activated by Ca(2+). Cysteine protease that cleaves specifically after arginine or lysine residues. May play a role in apoptosis. This chain is Metacaspase-1, found in Plasmodium falciparum (isolate 3D7).